We begin with the raw amino-acid sequence, 873 residues long: F-box only protein 41 (873 aa).

A compositionally biased stretch (polar residues) spans 85–97 (ESTSFQGKEQATG). Disordered stretches follow at residues 85–110 (ESTS…HHHH), 163–193 (SSAC…SPAD), and 345–540 (SSSC…PSRS). Positions 168–178 (TPPPGPGPGPC) are enriched in pro residues. Residues 179-192 (SGPSSASPASPSPA) are compositionally biased toward low complexity. Residues 207-349 (ALEKLEVDRR…QLQVISSSCG (143 aa)) adopt a coiled-coil conformation. A compositionally biased stretch (gly residues) spans 357 to 371 (GRGGGGSASGPGVRG). Arginine 358 is modified (omega-N-methylarginine). Composition is skewed to polar residues over residues 384-414 (VPST…SSGC) and 442-456 (AQAT…QAPR). Serine 476 is subject to Phosphoserine. Threonine 477 carries the post-translational modification Phosphothreonine. Positions 548-592 (ILKMRAALFCIFTYLDTRTLLHAAEVCRDWRFVARHPAVWTRVLL) constitute an F-box domain. Serine 760 bears the Phosphoserine mark.

As to quaternary structure, directly interacts with SKP1 and CUL1.

Functionally, substrate-recognition component of the SCF (SKP1-CUL1-F-box protein)-type E3 ubiquitin ligase complex. In Mus musculus (Mouse), this protein is F-box only protein 41 (Fbxo41).